The following is a 92-amino-acid chain: Acylphosphatase (92 aa).

Cysteines 5 and 49 form a disulfide. The Acylphosphatase-like domain occupies C5–R92. Residues R20 and N38 contribute to the active site.

The protein belongs to the acylphosphatase family.

It carries out the reaction an acyl phosphate + H2O = a carboxylate + phosphate + H(+). This Escherichia coli O157:H7 protein is Acylphosphatase.